We begin with the raw amino-acid sequence, 263 residues long: UPF0739 protein C1orf74 homolog (263 aa).

This sequence belongs to the UPF0739 family.

This chain is UPF0739 protein C1orf74 homolog, found in Xenopus tropicalis (Western clawed frog).